A 352-amino-acid chain; its full sequence is RING finger protein 39 (352 aa).

An RING-type zinc finger spans residues Cys20–Gly67. The tract at residues Pro98–Pro118 is disordered. In terms of domain architecture, B30.2/SPRY spans Glu142–Ala352.

In terms of tissue distribution, expressed in the hippocampus. Expression is rapidly up-regulated in granule cells of the dentate gyrus after LTP induction.

The protein localises to the cytoplasm. The enzyme catalyses S-ubiquitinyl-[E2 ubiquitin-conjugating enzyme]-L-cysteine + [acceptor protein]-L-lysine = [E2 ubiquitin-conjugating enzyme]-L-cysteine + N(6)-ubiquitinyl-[acceptor protein]-L-lysine.. The protein operates within protein modification; protein ubiquitination. Its function is as follows. Plays an inhibitory role in anti-RNA viral innate immunity by targeting the adapter DDX3X and promoting its 'Lys-48'-linked polyubiquitination. Alternatively, enhances the cGAS-STING pathway activation by promoting 'Lys-63'-linked ubiquitination of STING1, facilitating the STING1-TBK1 complex formation and STING1 activation. The chain is RING finger protein 39 (Rnf39) from Rattus norvegicus (Rat).